Consider the following 1704-residue polypeptide: Nonribosomal peptide synthetase ivoA (1704 aa).

Residues 234 to 620 (EEQAIARPDQ…HGRKDLEVKI (387 aa)) form an adenylation region. A Carrier domain is found at 748–827 (NLISDPSDSM…EMATKTSAVE (80 aa)). S785 is modified (O-(pantetheine 4'-phosphoryl)serine). Positions 840 to 1266 (FPLSPVQQMY…QELLETAVER (427 aa)) are epimerization (E) domain. Positions 1325–1477 (VQGDWTIEKT…AQSSTPSARK (153 aa)) are condensation.

The protein belongs to the NRP synthetase family.

It catalyses the reaction L-tryptophan + ATP + H2O = D-tryptophan + AMP + diphosphate + H(+). It participates in pigment biosynthesis. Functionally, nonribosomal peptide synthetase; part of the pathway that mediates the biosynthesis of the gray-brown conidiophore pigment. The first step of the pathway is performed by the nonribosomal peptide synthetase ivoA that catalyzes ATP-dependent unidirectional stereoinversion of L-tryptophan to D-tryptophan with complete conversion. While the stereoinversion is catalyzed by the epimerization (E) domain of ivoA, the terminal condensation (C) domain stereoselectively hydrolyzes D-tryptophanyl-S-phosphopantetheine thioester and thus represents a non-canonical C domain function. D-tryptophan is acetylated, probably by an endogenous acetyltransferase. N-acetyltryptophan is further 6-hydroxylated into N-acetyl-6-hydroxytryptophan (AHT) by the cytochrome P450 monooxygenase ivoC. N-acetyl-6-hydroxytryptophan is substrate of the N-acetyl-6-hydroxytryptophan oxidase ivoB to produce the gray-brown conidiophore pigment. In Emericella nidulans (strain FGSC A4 / ATCC 38163 / CBS 112.46 / NRRL 194 / M139) (Aspergillus nidulans), this protein is Nonribosomal peptide synthetase ivoA.